Here is a 489-residue protein sequence, read N- to C-terminus: Adenosylhomocysteinase (489 aa).

The substrate site is built by Thr-68, Asp-151, and Glu-213. 214–216 (TTT) provides a ligand contact to NAD(+). Substrate contacts are provided by Lys-243 and Asp-247. NAD(+) contacts are provided by residues Asn-248, 277 to 282 (GYGDVG), Glu-300, Asn-335, 356 to 358 (IGH), and Asn-403.

This sequence belongs to the adenosylhomocysteinase family. It depends on NAD(+) as a cofactor.

It is found in the cytoplasm. It carries out the reaction S-adenosyl-L-homocysteine + H2O = L-homocysteine + adenosine. It participates in amino-acid biosynthesis; L-homocysteine biosynthesis; L-homocysteine from S-adenosyl-L-homocysteine: step 1/1. Its function is as follows. May play a key role in the regulation of the intracellular concentration of adenosylhomocysteine. The polypeptide is Adenosylhomocysteinase (Mycobacterium sp. (strain JLS)).